We begin with the raw amino-acid sequence, 309 residues long: Spermatid maturation protein 1 (309 aa).

A helical transmembrane segment spans residues 29–49 (VLLLLGLIICINISINIVTLL). The segment at 209–231 (PPPPSPEAPSHKNGGEGAVPEAE) is disordered. The stretch at 259-285 (RIVYDARDMRRRLRELTREVEALSGCY) forms a coiled coil.

Its subcellular location is the membrane. It is found in the cytoplasm. Functionally, required for proper cytoplasm removal during spermatogenesis. This Homo sapiens (Human) protein is Spermatid maturation protein 1 (SPEM1).